We begin with the raw amino-acid sequence, 579 residues long: uncharacterized protein (579 aa).

The next 3 membrane-spanning stretches (helical) occupy residues 173–193 (IAMG…GGLA), 196–216 (FVAA…MIGA), and 218–238 (YLGT…GFGA).

This sequence belongs to the TMCO4 family.

Its subcellular location is the cytoplasm. The protein resides in the nucleus membrane. This is an uncharacterized protein from Schizosaccharomyces pombe (strain 972 / ATCC 24843) (Fission yeast).